The primary structure comprises 242 residues: MRTGVIAKKVGMTRLFQEDGRHVPVTVLKLEDVQVVAVKNKDQDGYVAVQLGAGSAKAKNVTKPVRGHFAKAEVELKAKLVEFPVSEDAVLEVGTSISADHFIAGQLVDISGQTQGKGFAGAMKRWGFGGLRATHGVSLSHRSHGSTGNRQDPGRVFKNKKMAGHMGARQRTQQNLEVISTDAERDLIFVRGSVPGSKGAWLIIRDAVKVARPTDAPYPAAIKAANGNEAPAAPVAAEGQEG.

At glutamine 151 the chain carries N5-methylglutamine.

It belongs to the universal ribosomal protein uL3 family. Part of the 50S ribosomal subunit. Forms a cluster with proteins L14 and L19. In terms of processing, methylated by PrmB.

In terms of biological role, one of the primary rRNA binding proteins, it binds directly near the 3'-end of the 23S rRNA, where it nucleates assembly of the 50S subunit. The protein is Large ribosomal subunit protein uL3 of Zymomonas mobilis subsp. mobilis (strain ATCC 31821 / ZM4 / CP4).